The chain runs to 279 residues: Oxygen-dependent coproporphyrinogen-III oxidase (279 aa).

Residue S102 participates in substrate binding. Residues H106 and H116 each coordinate a divalent metal cation. H116 acts as the Proton donor in catalysis. 118-120 provides a ligand contact to substrate; that stretch reads NTR. A divalent metal cation contacts are provided by H149 and H179. Positions 244 to 279 are important for dimerization; the sequence is YVEFNLLYDRGTKFGLMTDGNVEAILMSLPPVVKFN.

The protein belongs to the aerobic coproporphyrinogen-III oxidase family. In terms of assembly, homodimer. A divalent metal cation serves as cofactor.

The protein localises to the cytoplasm. The enzyme catalyses coproporphyrinogen III + O2 + 2 H(+) = protoporphyrinogen IX + 2 CO2 + 2 H2O. The protein operates within porphyrin-containing compound metabolism; protoporphyrin-IX biosynthesis; protoporphyrinogen-IX from coproporphyrinogen-III (O2 route): step 1/1. Its function is as follows. Involved in the heme biosynthesis. Catalyzes the aerobic oxidative decarboxylation of propionate groups of rings A and B of coproporphyrinogen-III to yield the vinyl groups in protoporphyrinogen-IX. The polypeptide is Oxygen-dependent coproporphyrinogen-III oxidase (Rickettsia prowazekii (strain Madrid E)).